The primary structure comprises 489 residues: Toxin coregulated pilus biosynthesis outer membrane protein C (489 aa).

The N-terminal stretch at 1–16 is a signal peptide; it reads MKKTIISTLVIGLVSG. A lipid anchor (N-palmitoyl cysteine) is attached at Cys-17. Cys-17 is lipidated: S-diacylglycerol cysteine. The next 4 helical transmembrane spans lie at 174–190, 294–308, 402–417, and 442–457; these read FSSS…SSGL, AISL…GASY, QLVS…LPTV, and NYIQ…GGGT.

It localises to the cell membrane. Functionally, involved in TCP pilus biogenesis. This chain is Toxin coregulated pilus biosynthesis outer membrane protein C (tcpC), found in Vibrio cholerae serotype O1 (strain ATCC 39315 / El Tor Inaba N16961).